We begin with the raw amino-acid sequence, 130 residues long: Small ribosomal subunit protein uS9 (130 aa).

Belongs to the universal ribosomal protein uS9 family.

This Enterococcus faecalis (strain ATCC 700802 / V583) protein is Small ribosomal subunit protein uS9.